A 245-amino-acid polypeptide reads, in one-letter code: Transcriptional activator protein ExpR (245 aa).

In terms of domain architecture, HTH luxR-type spans 173–238 (RSNDKDIFSQ…HAIRLGIELQ (66 aa)). A DNA-binding region (H-T-H motif) is located at residues 197-216 (YQEIALILDIKTGTVKFHIG).

It belongs to the autoinducer-regulated transcriptional regulatory protein family.

Functionally, functions as an OHLL responsive transcriptional regulator that acts in virulence (soft rot disease) through the activation of genes for plant tissue macerating enzymes. The polypeptide is Transcriptional activator protein ExpR (expR) (Pectobacterium parmentieri).